Reading from the N-terminus, the 347-residue chain is Extracellular metalloprotease (347 aa).

The signal sequence occupies residues 1-20 (MKSRPICSVIPPYILHRIIA). Residues 43 to 68 (SHHPRPEPHEKLPAGQANRSIHDAEQ) are disordered. Zn(2+) is bound at residue histidine 162. The active site involves glutamate 163. Residues histidine 166 and glutamate 186 each coordinate Zn(2+). Histidine 264 (proton donor) is an active-site residue.

The protein belongs to the peptidase M4 family. Ca(2+) serves as cofactor. It depends on Zn(2+) as a cofactor.

It localises to the secreted. This chain is Extracellular metalloprotease (prt1), found in Pectobacterium carotovorum subsp. carotovorum (Erwinia carotovora subsp. carotovora).